The chain runs to 96 residues: Cytochrome c2 iso-2 (96 aa).

Positions 10, 13, 14, and 75 each coordinate heme c.

Belongs to the cytochrome c family. Post-translationally, binds 1 heme c group covalently per subunit.

Functionally, cytochrome c2 is found mainly in purple, non-sulfur, photosynthetic bacteria where it functions as the electron donor to the oxidized bacteriochlorophyll in the photophosphorylation pathway. However, it may also have a role in the respiratory chain and is found in some non-photosynthetic bacteria. The protein is Cytochrome c2 iso-2 of Magnetospirillum fulvum (Rhodospirillum fulvum).